The sequence spans 230 residues: UPF0173 metal-dependent hydrolase Sca_1312 (230 aa).

Belongs to the UPF0173 family.

The protein is UPF0173 metal-dependent hydrolase Sca_1312 of Staphylococcus carnosus (strain TM300).